Reading from the N-terminus, the 286-residue chain is Prohibitin-6, mitochondrial (286 aa).

Residues 1–12 are Mitochondrial matrix-facing; it reads MNFKNVKVPKGP. Residues 13–35 form a helical; Signal-anchor for type II membrane protein membrane-spanning segment; sequence GGGVIAAVVIGGLSLYGATHTLY. Over 36-286 the chain is Mitochondrial intermembrane; it reads NVDGGHRAIV…AMDLDVKPKK (251 aa).

This sequence belongs to the prohibitin family. As to quaternary structure, component of a prohibitin multimeric complex in mitochondrial membranes. Mostly expressed in proliferative tissues, including vasculature, shoot and root apical tissues.

It localises to the mitochondrion inner membrane. Prohibitin probably acts as a holdase/unfoldase for the stabilization of newly synthesized mitochondrial proteins. This is Prohibitin-6, mitochondrial (PHB6) from Arabidopsis thaliana (Mouse-ear cress).